A 586-amino-acid polypeptide reads, in one-letter code: Adenine deaminase (586 aa).

Belongs to the metallo-dependent hydrolases superfamily. Adenine deaminase family. Requires Mn(2+) as cofactor.

It carries out the reaction adenine + H2O + H(+) = hypoxanthine + NH4(+). The chain is Adenine deaminase from Bdellovibrio bacteriovorus (strain ATCC 15356 / DSM 50701 / NCIMB 9529 / HD100).